We begin with the raw amino-acid sequence, 147 residues long: Ribonuclease 4 (147 aa).

Positions 1-28 (MDIQRTQSLLLLLLLTLLGLGLVQPSYG) are cleaved as a signal peptide. A Pyrrolidone carboxylic acid modification is found at Gln29. DUMP is bound by residues Arg35, His40, Lys68, Asn71, and Thr72. Catalysis depends on His40, which acts as the Proton acceptor. Cystine bridges form between Cys53–Cys109, Cys67–Cys120, Cys85–Cys135, and Cys92–Cys99. His144 serves as the catalytic Proton donor. Residue Phe145 coordinates dUMP.

Belongs to the pancreatic ribonuclease family.

It localises to the secreted. Its function is as follows. Cleaves preferentially after uridine bases. Has antimicrobial activity against uropathogenic E.coli (UPEC). Probably contributes to urinary tract sterility. This chain is Ribonuclease 4 (Rnase4), found in Rattus norvegicus (Rat).